We begin with the raw amino-acid sequence, 211 residues long: Adenylate kinase (211 aa).

10-15 (GAGKGT) lines the ATP pocket. The tract at residues 30–59 (STGGILRAAIQKQTALGKKVQKVVEVGGLV) is NMP. AMP-binding positions include Thr-31, Arg-36, 57-59 (GLV), 85-88 (GFPR), and Gln-92. Residues 121–158 (GRRVCSACGSSYHVLFAQPKREGVCDRCRGVLVVREDD) are LID. Arg-122 contacts ATP. Positions 125 and 128 each coordinate Zn(2+). 131–132 (SY) contacts ATP. Cys-145 and Cys-148 together coordinate Zn(2+). AMP contacts are provided by Arg-155 and Arg-166. Pro-194 lines the ATP pocket.

Belongs to the adenylate kinase family. Monomer.

It localises to the cytoplasm. It carries out the reaction AMP + ATP = 2 ADP. Its pathway is purine metabolism; AMP biosynthesis via salvage pathway; AMP from ADP: step 1/1. In terms of biological role, catalyzes the reversible transfer of the terminal phosphate group between ATP and AMP. Plays an important role in cellular energy homeostasis and in adenine nucleotide metabolism. The protein is Adenylate kinase of Treponema pallidum (strain Nichols).